We begin with the raw amino-acid sequence, 857 residues long: Facilitated trehalose transporter Tret1-1 (857 aa).

2 disordered regions span residues 1–27 (MSGR…GKLK) and 92–203 (SFRP…KATS). The Cytoplasmic segment spans residues 1–392 (MSGRDNRGAG…VYRPTTNPIY (392 aa)). A compositionally biased stretch (basic and acidic residues) spans 134-143 (EIREHRDRQQ). Residues 171–181 (GNSNTNSNKAA) are compositionally biased toward polar residues. Serine 248, serine 249, serine 250, serine 320, and serine 322 each carry phosphoserine. The disordered stretch occupies residues 327–346 (LTSRQHFQQQRSISTDSRKS). The segment covering 330–341 (RQHFQQQRSIST) has biased composition (polar residues). Residues 393-413 (IWTQVLAALSVSLGSLVVGFV) form a helical membrane-spanning segment. The Extracellular portion of the chain corresponds to 414-440 (SAYTSPALVSMTDRNITSFEVTQDAGS). Asparagine 428 carries N-linked (GlcNAc...) asparagine glycosylation. The chain crosses the membrane as a helical span at residues 441–461 (WVGGIMPLAALAGGITGGPLI). The Cytoplasmic portion of the chain corresponds to 462–473 (EYLGRRNTILAT). The helical transmembrane segment at 474 to 494 (AVPFIVSSLLIACAVNVAMVL) threads the bilayer. The Extracellular segment spans residues 495-497 (CGR). The chain crosses the membrane as a helical span at residues 498–518 (FLAGFCVGIASLSLPVYLGET). Over 519–528 (VQPEVRGTLG) the chain is Cytoplasmic. A helical membrane pass occupies residues 529-549 (LLPTAFGNIGILLCFVAGSFM). N-linked (GlcNAc...) asparagine glycosylation is present at asparagine 550. The Extracellular segment spans residues 550–552 (NWS). The chain crosses the membrane as a helical span at residues 553 to 573 (MLAFLGAALPVPFLILMFLIP). The Cytoplasmic segment spans residues 574-636 (ETPRWFVGRG…ELLKLNNLKP (63 aa)). The helical transmembrane segment at 637-657 (LSISLGLMFFQQFSGINAVIF) threads the bilayer. Residues 658-673 (YTVQIFKDAGSTIDGN) are Extracellular-facing. Residues 674 to 694 (LCTIIVGIVNFLATFIGIVLI) form a helical membrane-spanning segment. The Cytoplasmic segment spans residues 695–700 (DRAGRK). Residues 701–721 (ILLYVSDIAMVLTLFVLGGFF) traverse the membrane as a helical segment. Over 722-740 (YCKANGPDVSHLGWLPLTC) the chain is Extracellular. Residues 741-761 (FVIYILGFSLGFGPIPWLMMG) traverse the membrane as a helical segment. Topologically, residues 762–767 (EILPAK) are cytoplasmic. The chain crosses the membrane as a helical span at residues 768-788 (IRGSAASVATAFNWFCTFVVT). Residues 789 to 801 (KTFQDLTVAMGAH) lie on the Extracellular side of the membrane. Residues 802-822 (GAFWLFGAICFVGLFFVIIYV) form a helical membrane-spanning segment. Residues 823 to 857 (PETQGKTLEDIERKMMGRVRRMSSVANIKPLSFNM) lie on the Cytoplasmic side of the membrane. 2 positions are modified to phosphoserine: serine 845 and serine 846.

It belongs to the major facilitator superfamily. Sugar transporter (TC 2.A.1.1) family. Trehalose transporter subfamily.

The protein localises to the cell membrane. Its function is as follows. Low-capacity facilitative transporter for trehalose. Does not transport maltose, sucrose or lactose. Mediates the bidirectional transfer of trehalose. Responsible for the transport of trehalose synthesized in the fat body and the incorporation of trehalose into other tissues that require a carbon source, thereby regulating trehalose levels in the hemolymph. The polypeptide is Facilitated trehalose transporter Tret1-1 (Drosophila sechellia (Fruit fly)).